The chain runs to 589 residues: Protein NRT1/ PTR FAMILY 4.7 (589 aa).

12 helical membrane passes run 59-79, 105-125, 127-147, 160-180, 201-221, 230-250, 344-364, 383-403, 429-449, 471-491, 520-540, and 560-580; these read GMLAASFVLVVEVLENLAFLA, AFMGTAFFLALLGGFLADAFF, TFHIYLVSAAIEFLGLMVLTV, VFLFVGLYLVALGVGGIKGSL, FFFNYFIFSLSCGALIAVTVV, WSYGFGVSTAAILISVPVFLA, IVIKILPIFMSTIMLNCCLAQ, FTVPPAALPVFPVVFMMILAP, IGTGLVLSIVAMAVAALVETK, LPITFLWVAIQYVFLGSADLF, LAMGYYFSSVLVSAVNFVTGL, and FYWLMCVLSGINFLHYLFWAS.

The protein belongs to the major facilitator superfamily. Proton-dependent oligopeptide transporter (POT/PTR) (TC 2.A.17) family. As to expression, expressed in flowers.

It is found in the membrane. This is Protein NRT1/ PTR FAMILY 4.7 (NPF4.7) from Arabidopsis thaliana (Mouse-ear cress).